We begin with the raw amino-acid sequence, 67 residues long: Guanine nucleotide-binding protein G(I)/G(S)/G(O) subunit gamma-13 (67 aa).

Cysteine methyl ester is present on Cys-64. Cys-64 is lipidated: S-farnesyl cysteine. A propeptide spans 65 to 67 (TIL) (removed in mature form).

The protein belongs to the G protein gamma family. G proteins are composed of 3 units, alpha, beta and gamma.

The protein resides in the cell membrane. Guanine nucleotide-binding proteins (G proteins) are involved as a modulator or transducer in various transmembrane signaling systems. The beta and gamma chains are required for the GTPase activity, for replacement of GDP by GTP, and for G protein-effector interaction. This is Guanine nucleotide-binding protein G(I)/G(S)/G(O) subunit gamma-13 (Gng13) from Mus musculus (Mouse).